A 317-amino-acid chain; its full sequence is Melanocyte-stimulating hormone receptor (317 aa).

Residues 1 to 37 are Extracellular-facing; sequence MPVLGSQRRLLGSLNCTPPATFPLTLAPNRTGPQCLE. N29 carries an N-linked (GlcNAc...) asparagine glycan. A helical transmembrane segment spans residues 38-63; the sequence is VSIPDGLFLSLGLVSLVENVLVVAAI. At 64–72 the chain is on the cytoplasmic side; sequence AKNRNLHSP. A helical transmembrane segment spans residues 73–93; that stretch reads MYYFICCLAVSDLLVSVSNVL. The Extracellular segment spans residues 94 to 118; sequence ETAVMLLLEAGALAARAAVVQQLDN. Residues 119 to 140 traverse the membrane as a helical segment; that stretch reads VIDMLICGSMVSSLCFLGAIAV. Over 141–163 the chain is Cytoplasmic; that stretch reads DRYISIFYALRYHSVVTLPRAWR. A helical membrane pass occupies residues 164 to 183; the sequence is IIAAIWVASILTSLLFITYY. Residues 184–191 are Extracellular-facing; it reads NHTVVLLC. Residues 192–211 form a helical membrane-spanning segment; that stretch reads LVGFFIAMLALMAVLYVHML. The Cytoplasmic segment spans residues 212–240; the sequence is ARACQHARGIARLQKRQRPIHQGFGLKGA. The chain crosses the membrane as a helical span at residues 241 to 266; the sequence is ATLTILLGVFFLCWGPFFLHLSLIVL. Topologically, residues 267–279 are extracellular; sequence CPQHPTCGCIFKN. The helical transmembrane segment at 280 to 300 threads the bilayer; the sequence is FNLFLALIICNAIVDPLIYAF. The Cytoplasmic segment spans residues 301 to 317; sequence RSQELRKTLQEVLQCSW. C315 is lipidated: S-palmitoyl cysteine.

This sequence belongs to the G-protein coupled receptor 1 family. Interacts with MGRN1, but does not undergo MGRN1-mediated ubiquitination; this interaction competes with GNAS-binding and thus inhibits agonist-induced cAMP production. Interacts with OPN3; the interaction results in a decrease in MC1R-mediated cAMP signaling and ultimately a decrease in melanin production in melanocytes.

The protein resides in the cell membrane. Functionally, receptor for MSH (alpha, beta and gamma) and ACTH. The activity of this receptor is mediated by G proteins which activate adenylate cyclase. Mediates melanogenesis, the production of eumelanin (black/brown) and phaeomelanin (red/yellow), via regulation of cAMP signaling in melanocytes. This chain is Melanocyte-stimulating hormone receptor (MC1R), found in Capreolus capreolus (European roe deer).